The chain runs to 383 residues: MRWNKKSLFAVLNNHLIDYPTPINLNYFFGFGSLAGIMLVVQILTGIFLAMHYTPHIDLAFNSVEHIMRDVNNGWLMRYTHANGASFFFIVVYVHIFRGLYYGSYITPREALWCSGVIIFILMMATAFMGYVLPWGQMSFWGATVITNLFSAIPLIGKDIVDWLWGGFAVDNPTLNRFFSLHFTFPFVIVGAVLIHLILLHEVGSNNPLGITLKTENIPFYPYFYTKDLFGLMVLFLVFFIFIFYYPNTLGHPDNYIEANPMKTPLHIVPEWYFLPFYAILRSIPNKIGGVIAMFGSLIVLLTIPFTNSSEIRSTAFRPIFKVCYWLLVVAFLLLGWVGQCPVEYPYTEIGIISMIYYFFFFIIIIPFLGKFETYLVRYNTNK.

The next 4 membrane-spanning stretches (helical) occupy residues 31 to 51 (FGSL…FLAM), 75 to 97 (WLMR…VHIF), 112 to 132 (LWCS…MGYV), and 178 to 198 (FFSL…IHLI). Heme b is bound by residues His81 and His95. Residues His182 and His196 each contribute to the heme b site. His201 serves as a coordination point for a ubiquinone. 4 helical membrane-spanning segments follow: residues 224–244 (FYTK…IFIF), 288–308 (IGGV…PFTN), 320–340 (IFKV…WVGQ), and 347–367 (YTEI…IIIP).

It belongs to the cytochrome b family. Fungal cytochrome b-c1 complex contains 10 subunits; 3 respiratory subunits, 2 core proteins and 5 low-molecular weight proteins. Cytochrome b-c1 complex is a homodimer. It depends on heme b as a cofactor.

Its subcellular location is the mitochondrion inner membrane. In terms of biological role, component of the ubiquinol-cytochrome c reductase complex (complex III or cytochrome b-c1 complex) that is part of the mitochondrial respiratory chain. The b-c1 complex mediates electron transfer from ubiquinol to cytochrome c. Contributes to the generation of a proton gradient across the mitochondrial membrane that is then used for ATP synthesis. The protein is Cytochrome b (cob) of Phytophthora megasperma (Potato pink rot fungus).